We begin with the raw amino-acid sequence, 542 residues long: Putative cysteine ligase BshC (542 aa).

Residues 458 to 487 (VAKNAAILQAQIEFLQHALERALLRKHETE) are a coiled coil.

Belongs to the BshC family.

Functionally, involved in bacillithiol (BSH) biosynthesis. May catalyze the last step of the pathway, the addition of cysteine to glucosamine malate (GlcN-Mal) to generate BSH. This is Putative cysteine ligase BshC from Geobacillus kaustophilus (strain HTA426).